Consider the following 348-residue polypeptide: Flagellar P-ring protein (348 aa).

A signal peptide spans Met-1–Ala-16.

This sequence belongs to the FlgI family. In terms of assembly, the basal body constitutes a major portion of the flagellar organelle and consists of four rings (L,P,S, and M) mounted on a central rod.

Its subcellular location is the periplasm. It localises to the bacterial flagellum basal body. Functionally, assembles around the rod to form the L-ring and probably protects the motor/basal body from shearing forces during rotation. The polypeptide is Flagellar P-ring protein (Campylobacter lari (strain RM2100 / D67 / ATCC BAA-1060)).